The primary structure comprises 78 residues: DNA-directed RNA polymerase subunit Rpo5 (78 aa).

The protein belongs to the archaeal Rpo5/eukaryotic RPB5 RNA polymerase subunit family. Part of the RNA polymerase complex.

The protein resides in the cytoplasm. The enzyme catalyses RNA(n) + a ribonucleoside 5'-triphosphate = RNA(n+1) + diphosphate. Functionally, DNA-dependent RNA polymerase (RNAP) catalyzes the transcription of DNA into RNA using the four ribonucleoside triphosphates as substrates. This is DNA-directed RNA polymerase subunit Rpo5 from Methanococcus maripaludis (strain C7 / ATCC BAA-1331).